Consider the following 81-residue polypeptide: MTFFLVIILAISSSNYNVLAVSGPPKCIALCRPGYYERFECFHDCITEGYDDGSCVPGPTTAKCGIITKTTNKICYSFAFE.

The first 20 residues, Met-1–Ala-20, serve as a signal peptide directing secretion. 2 cysteine pairs are disulfide-bonded: Cys-31/Cys-55 and Cys-41/Cys-64.

It belongs to the DEFL family.

Its subcellular location is the secreted. This is Putative defensin-like protein 52 from Arabidopsis thaliana (Mouse-ear cress).